A 492-amino-acid chain; its full sequence is Catalase isozyme 1 (492 aa).

Catalysis depends on residues histidine 65 and asparagine 138. Tyrosine 348 provides a ligand contact to heme.

Belongs to the catalase family. Homotetramer. The cofactor is heme.

It localises to the peroxisome. It carries out the reaction 2 H2O2 = O2 + 2 H2O. Its function is as follows. Occurs in almost all aerobically respiring organisms and serves to protect cells from the toxic effects of hydrogen peroxide. This chain is Catalase isozyme 1 (CAT1), found in Solanum lycopersicum (Tomato).